The primary structure comprises 698 residues: Polyphosphate kinase (698 aa).

Residue N63 coordinates ATP. Residues R390 and R420 each contribute to the Mg(2+) site. The active-site Phosphohistidine intermediate is the H450. Positions 483, 579, and 607 each coordinate ATP.

Belongs to the polyphosphate kinase 1 (PPK1) family. Requires Mg(2+) as cofactor. Post-translationally, an intermediate of this reaction is the autophosphorylated ppk in which a phosphate is covalently linked to a histidine residue through a N-P bond.

The catalysed reaction is [phosphate](n) + ATP = [phosphate](n+1) + ADP. In terms of biological role, catalyzes the reversible transfer of the terminal phosphate of ATP to form a long-chain polyphosphate (polyP). The protein is Polyphosphate kinase of Xylella fastidiosa (strain 9a5c).